The sequence spans 166 residues: Small ribosomal subunit protein uS5 (166 aa).

The 64-residue stretch at 11 to 74 (LNEKLIAVNR…EKARRNMFTI (64 aa)) folds into the S5 DRBM domain.

Belongs to the universal ribosomal protein uS5 family. In terms of assembly, part of the 30S ribosomal subunit. Contacts proteins S4 and S8.

In terms of biological role, with S4 and S12 plays an important role in translational accuracy. Located at the back of the 30S subunit body where it stabilizes the conformation of the head with respect to the body. In Aliivibrio salmonicida (strain LFI1238) (Vibrio salmonicida (strain LFI1238)), this protein is Small ribosomal subunit protein uS5.